The following is a 551-amino-acid chain: Glucans biosynthesis protein D (551 aa).

Positions 1–32 (MDRRRFIKGSMAMAAVCGTSGIASLFSQAAFA) form a signal peptide, tat-type signal.

It belongs to the OpgD/OpgG family. In terms of processing, predicted to be exported by the Tat system. The position of the signal peptide cleavage has not been experimentally proven.

The protein resides in the periplasm. It functions in the pathway glycan metabolism; osmoregulated periplasmic glucan (OPG) biosynthesis. Probably involved in the control of the structural glucose backbone of osmoregulated periplasmic glucans (OPGs). The chain is Glucans biosynthesis protein D from Shigella dysenteriae serotype 1 (strain Sd197).